The following is a 489-amino-acid chain: MESMFSSPAEAALQRETGVPGLLTPLPDLDGVYELERVAGFVRDLGCERVALQFPDQLLGDAVAVAARLEETTGSKMFILGDTAYGSCCVDVLGAEQAGAQALIHFGPACLSPPARPLPVAFVLRQRSVALELCVKAFEAQNPDPKAPVVLLSEPACAHALEALATLLRPRYLDLLVSSPAFPQPVGSLSPEPMPLERFGRRFPLAPGRRLEEYGAFYVGGSKASPDPDLDPDLSRLLLGWAPGQPFSSCCPDTGKTQDEGARAGRLRARRRYLVERARDARVVGLLAGTLGVAQHREALAHLRNLTQAAGKRSYVLALGRPTPAKLANFPEVDVFVLLACPLGALAPQLSGSFFQPILAPCELEAACNPAWPPPGLAPHLTHYADLLPGSPFHVALPPPESELWETPDVSLITGDLRPPPAWKSSNDHGSLALTPRPQLELAESSPAASFLSSRSWQGLEPRLGQTPVTEAVSGRRGIAIAYEDEGSG.

Methionine 1 is modified (N-acetylmethionine). Phosphoserine is present on serine 7. 3 residues coordinate [4Fe-4S] cluster: cysteine 89, cysteine 110, and cysteine 341. Position 435 is a phosphothreonine (threonine 435). 2 positions are modified to phosphoserine: serine 446 and serine 456. A Phosphothreonine modification is found at threonine 467. Serine 488 is subject to Phosphoserine.

It belongs to the DPH1/DPH2 family. DPH2 subfamily. As to quaternary structure, component of the 2-(3-amino-3-carboxypropyl)histidine synthase complex composed of DPH1, DPH2, DPH3 and a NADH-dependent reductase. Interacts with DPH1. [4Fe-4S] cluster is required as a cofactor. In terms of tissue distribution, strongly expressed in skeletal muscle. Moderately expressed in heart, small intestine, liver, pancreas, testis and colon. Weakly expressed in brain, placenta, kidney, spleen, thymus, prostate, ovary and lymphocytes.

Its pathway is protein modification; peptidyl-diphthamide biosynthesis. In terms of biological role, required for the first step of diphthamide biosynthesis, a post-translational modification of histidine which occurs in elongation factor 2. DPH1 and DPH2 transfer a 3-amino-3-carboxypropyl (ACP) group from S-adenosyl-L-methionine (SAM) to a histidine residue, the reaction is assisted by a reduction system comprising DPH3 and a NADH-dependent reductase. Facilitates the reduction of the catalytic iron-sulfur cluster found in the DPH1 subunit. This is 2-(3-amino-3-carboxypropyl)histidine synthase subunit 2 (DPH2) from Homo sapiens (Human).